The following is a 360-amino-acid chain: uncharacterized protein (360 aa).

It to P.multocida PM1082.

This is an uncharacterized protein from Pasteurella multocida (strain Pm70).